The chain runs to 232 residues: RNA chaperone ProQ (232 aa).

Positions 105–182 (EAKARVQAQR…REEQHTPVSD (78 aa)) are disordered. Residues 117-136 (QQAKKREAAAAAGEKEDAPR) show a composition bias toward basic and acidic residues. Basic residues predominate over residues 137-146 (RERKPRPTTP). Over residues 147 to 177 (RRKEGAERKPRAQKPVEKAPKTVKAPREEQH) the composition is skewed to basic and acidic residues.

This sequence belongs to the ProQ family.

Its subcellular location is the cytoplasm. Functionally, RNA chaperone with significant RNA binding, RNA strand exchange and RNA duplexing activities. May regulate ProP activity through an RNA-based, post-transcriptional mechanism. This Escherichia coli (strain ATCC 8739 / DSM 1576 / NBRC 3972 / NCIMB 8545 / WDCM 00012 / Crooks) protein is RNA chaperone ProQ.